Reading from the N-terminus, the 573-residue chain is MSQSLADIIAALPDGDGWGPAVTTELTLNGVPYAPFSKGDKLGRMADWTDGKDRDGRGGRQQYNRNFRDQQVYGAGTASLFSAPQAEDESTFSVVSNVRDSTKTRFGRGAVFTRGGRGQRGARGTERGGRAQLSRGRGGQYGGGYDRGGRSAAGGRGGRRFGWKDYDKPARNRDASINVKADWSLLEEIDFNRLGKLNLDADEGEDVDSYGFVHYYDRSYDKPAVKSAERKLNPIDRAAYNVTTSLDPVIQELAEKDEATIFATDNILSTLMCAPRSVYPWDIVIVKQGSKVYFDKRDNAALDMVTVNENAVDAPLEASEGSKDSINQPSALAEEATYINHNFVNQVVIENESQKVDMEHENPFYNAAEETEPPASKAYKYRKFDLSTNDEGPVYLVVRTELDAVQKNSNNGEDQFLTVRALNEFDNKAQGSGGALDWRSKLVSQRGAVVATEMKNNSCKLAKWTVQSILAKADVLKLGFVSRANPKSNDKHVILGVIGWKPKDFANQMNLHLSNGWGIVRTIADMCLKREDGKYVLVKDPNKTILRLYEVPAGGLDEEEDNGDLGQEEDDEE.

Residues 111–162 are disordered; it reads VFTRGGRGQRGARGTERGGRAQLSRGRGGQYGGGYDRGGRSAAGGRGGRRFG. The segment covering 136–156 has biased composition (gly residues); the sequence is GRGGQYGGGYDRGGRSAAGGR. The RNA gate stretch occupies residues 301–315; that stretch reads ALDMVTVNENAVDAP. The segment at 552-573 is disordered; it reads PAGGLDEEEDNGDLGQEEDDEE. Residues 556–573 show a composition bias toward acidic residues; that stretch reads LDEEEDNGDLGQEEDDEE.

It belongs to the eIF-3 subunit D family. As to quaternary structure, component of the eukaryotic translation initiation factor 3 (eIF-3) complex.

It is found in the cytoplasm. Functionally, mRNA cap-binding component of the eukaryotic translation initiation factor 3 (eIF-3) complex, which is involved in protein synthesis of a specialized repertoire of mRNAs and, together with other initiation factors, stimulates binding of mRNA and methionyl-tRNAi to the 40S ribosome. The eIF-3 complex specifically targets and initiates translation of a subset of mRNAs involved in cell proliferation. In the eIF-3 complex, eif3d specifically recognizes and binds the 7-methylguanosine cap of a subset of mRNAs. The chain is Eukaryotic translation initiation factor 3 subunit D from Pyricularia oryzae (strain 70-15 / ATCC MYA-4617 / FGSC 8958) (Rice blast fungus).